We begin with the raw amino-acid sequence, 554 residues long: Dihydroxy-acid dehydratase (554 aa).

Aspartate 78 is a Mg(2+) binding site. Position 119 (cysteine 119) interacts with [2Fe-2S] cluster. Mg(2+)-binding residues include aspartate 120 and lysine 121. Position 121 is an N6-carboxylysine (lysine 121). Cysteine 191 contacts [2Fe-2S] cluster. A Mg(2+)-binding site is contributed by glutamate 442. Serine 468 acts as the Proton acceptor in catalysis.

Belongs to the IlvD/Edd family. In terms of assembly, homodimer. [2Fe-2S] cluster is required as a cofactor. The cofactor is Mg(2+).

The enzyme catalyses (2R)-2,3-dihydroxy-3-methylbutanoate = 3-methyl-2-oxobutanoate + H2O. The catalysed reaction is (2R,3R)-2,3-dihydroxy-3-methylpentanoate = (S)-3-methyl-2-oxopentanoate + H2O. It functions in the pathway amino-acid biosynthesis; L-isoleucine biosynthesis; L-isoleucine from 2-oxobutanoate: step 3/4. It participates in amino-acid biosynthesis; L-valine biosynthesis; L-valine from pyruvate: step 3/4. Functions in the biosynthesis of branched-chain amino acids. Catalyzes the dehydration of (2R,3R)-2,3-dihydroxy-3-methylpentanoate (2,3-dihydroxy-3-methylvalerate) into 2-oxo-3-methylpentanoate (2-oxo-3-methylvalerate) and of (2R)-2,3-dihydroxy-3-methylbutanoate (2,3-dihydroxyisovalerate) into 2-oxo-3-methylbutanoate (2-oxoisovalerate), the penultimate precursor to L-isoleucine and L-valine, respectively. The polypeptide is Dihydroxy-acid dehydratase (Hydrogenobaculum sp. (strain Y04AAS1)).